A 542-amino-acid polypeptide reads, in one-letter code: Chondroitin sulfate N-acetylgalactosaminyltransferase 2 (542 aa).

At 1–13 (MSRRGSILHSRTQ) the chain is on the cytoplasmic side. Residues 14 to 34 (WLLLGLALLFSLVLFMYLLEC) traverse the membrane as a helical; Signal-anchor for type II membrane protein segment. At 35 to 542 (APQTDGNASL…AYRTNSETAG (508 aa)) the chain is on the lumenal side. The N-linked (GlcNAc...) asparagine glycan is linked to asparagine 41. Positions 59-105 (ALLQEQEEHYQTRATSLKRQIAQLKQELQDMSEKMRALQERKKLGAN) form a coiled coil. A glycan (N-linked (GlcNAc...) asparagine) is linked at asparagine 333. Aspartate 369 and histidine 486 together coordinate a divalent metal cation.

It belongs to the chondroitin N-acetylgalactosaminyltransferase family.

It localises to the golgi apparatus. The protein localises to the golgi stack membrane. It carries out the reaction 3-O-(beta-D-GlcA-(1-&gt;3)-beta-D-Gal-(1-&gt;3)-beta-D-Gal-(1-&gt;4)-beta-D-Xyl)-L-seryl-[protein] + UDP-N-acetyl-alpha-D-galactosamine = 3-O-(beta-D-GalNAc-(1-&gt;4)-beta-D-GlcA-(1-&gt;3)-beta-D-Gal-(1-&gt;3)-beta-D-Gal-(1-&gt;4)-beta-D-Xyl)-L-seryl-[protein] + UDP + H(+). Transfers 1,4-N-acetylgalactosamine (GalNAc) from UDP-GalNAc to the non-reducing end of glucuronic acid (GlcUA). Required for addition of the first GalNAc to the core tetrasaccharide linker and for elongation of chondroitin chains. The chain is Chondroitin sulfate N-acetylgalactosaminyltransferase 2 (Csgalnact2) from Mus musculus (Mouse).